Reading from the N-terminus, the 364-residue chain is C2 calcium-dependent domain-containing protein 4A (364 aa).

2 disordered regions span residues 118-175 and 192-242; these read GSPS…PPRC and AGRS…RPER. A compositionally biased stretch (polar residues) spans 220 to 233; the sequence is SPGSPTQAPVTSLS. One can recognise a C2 domain in the interval 254–364; that stretch reads AGGALRLAAE…ELLLGPLLLL (111 aa).

It belongs to the C2CD4 family.

The protein resides in the nucleus. May be involved in inflammatory process. May regulate cell architecture and adhesion. This Bos taurus (Bovine) protein is C2 calcium-dependent domain-containing protein 4A (C2CD4A).